We begin with the raw amino-acid sequence, 1241 residues long: MIENWPKKPEGSQWTDDQWKAVVANGRDILVAAAAGSGKTAVLVERIIKKIINEENPVDVDRLLVVTFTNAAAQEMKNRIGEALEKVLIDEPGSQHIRKQLSLLNKASISTIHSFCLQVIRGYYYMLDVDPRFRIANQTENELLKEEVLDDILEEEYGIEDNTIFFELVDRYTSDRSDDDLQRMILALHTESRAHPNPEKWLDKLVEAYDVEGKTIEDLVYASYLLEDVKFQLETAEQHIRKATELAMLPDGPAPRVETLQADLALLGTLSSAARESWTSVYEAMQNVSWQTLKRIKKSDYNEDIVKQVDSLRNKAKDEVKKLQEELFSRRPESFLRDFQDMHPVLEKLVQLVKVFTERFQAMKRDKGMVDFTDLEHFCLQILSEQSEDGEMKPSAVALQYRNKFAEVLVDEYQDTNFVQESIIKFVTKDSESEGNLFMVGDVKQSIYRFRLAEPGLFLGKYKRFTQEGLGGGMKIDLAKNFRSRHEVLAGTNFIFKQIMGEEVGEIDYDADAELKLGATYPEGEDVAAELLCIQQTEEEVIDGEEGAEVEKAQLEARLMAQRIKAMVDSGYEVYDRKTDSMRPVQYRDFVILLRSMPWAPQIMEELKLQGIPVYADLATGYFEATEVNIMMNVFRVIDNPMQDIPLAAVLRSPIVGLNDEELATLRAHGKKGSFYEVMSSFLKGAPLEEEKELHDKLEWFYNLLQGWREFARQQSLSDLIWKVYGETGYYDFVGGLPAGKQRQANLRVLYDRARQYEATSFRGLFRFLRFIERILERGDDMGTARALGEQEDVVRIMTIHKSKGLEFPVVFVAGLGRRFNTQDLMKRFLLHKDFGFGSQFIDPRKRIKYTTLSQLAIKRKMKMELIAEEMRVLYVALTRAKEKLILIGTVKDANKEMEKWLDAREYSEWLLPDHIRAGASCYLDWIAPSLYRHRDSEMLLELGQGSIPDEIYGYDTSWKVEVVDGNTLLAPEPVQEEKQELLEALREKKAVPLQSERKDEVYDRLMWKYGYEEATSHRAKQSVTEIKRNYQSEEGSDNAFIKKLRAPIQTRPRFMEKKGLTYAERGTAVHAVMQHVDLKKPITVEVLQEQIAGMVNKELLTFEQAEEIAVEKVISFFDSDLGKRVLAAKSVEREVPFTMMLAAEEAYQDWQGKSGESILVQGVIDCMIEEEDGITLIDFKTDTIEGKFPGGFEQAKPILEERYKVQLSLYAKALEKSLQHPVKEKCLYFFDGNHVIKVEE.

The 474-residue stretch at 12–485 (SQWTDDQWKA…IDLAKNFRSR (474 aa)) folds into the UvrD-like helicase ATP-binding domain. Position 33-40 (33-40 (AAAGSGKT)) interacts with ATP. In terms of domain architecture, UvrD-like helicase C-terminal spans 505 to 805 (GEIDYDADAE…RIMTIHKSKG (301 aa)).

Belongs to the helicase family. AddA subfamily. In terms of assembly, heterodimer of AddA and AddB/RexB. Requires Mg(2+) as cofactor.

The enzyme catalyses Couples ATP hydrolysis with the unwinding of duplex DNA by translocating in the 3'-5' direction.. The catalysed reaction is ATP + H2O = ADP + phosphate + H(+). Its function is as follows. The heterodimer acts as both an ATP-dependent DNA helicase and an ATP-dependent, dual-direction single-stranded exonuclease. Recognizes the chi site generating a DNA molecule suitable for the initiation of homologous recombination. The AddA nuclease domain is required for chi fragment generation; this subunit has the helicase and 3' -&gt; 5' nuclease activities. In Bacillus thuringiensis subsp. konkukian (strain 97-27), this protein is ATP-dependent helicase/nuclease subunit A.